We begin with the raw amino-acid sequence, 90 residues long: Small ribosomal subunit protein bS16 (90 aa).

Belongs to the bacterial ribosomal protein bS16 family.

This chain is Small ribosomal subunit protein bS16, found in Lysinibacillus sphaericus (strain C3-41).